A 413-amino-acid chain; its full sequence is Histidine--tRNA ligase (413 aa).

The protein belongs to the class-II aminoacyl-tRNA synthetase family. In terms of assembly, homodimer.

The protein resides in the cytoplasm. The enzyme catalyses tRNA(His) + L-histidine + ATP = L-histidyl-tRNA(His) + AMP + diphosphate + H(+). In Rickettsia prowazekii (strain Madrid E), this protein is Histidine--tRNA ligase (hisS).